The chain runs to 446 residues: Tubulin beta-1 chain (446 aa).

GTP contacts are provided by Gln11, Glu69, Ser138, Gly142, Thr143, Gly144, Asn204, and Asn226. Glu69 provides a ligand contact to Mg(2+). The interval 422 to 446 (YQQYQDATADEEGEYEDEEEGDLQD) is disordered. Acidic residues predominate over residues 429-446 (TADEEGEYEDEEEGDLQD).

Belongs to the tubulin family. As to quaternary structure, dimer of alpha and beta chains. A typical microtubule is a hollow water-filled tube with an outer diameter of 25 nm and an inner diameter of 15 nM. Alpha-beta heterodimers associate head-to-tail to form protofilaments running lengthwise along the microtubule wall with the beta-tubulin subunit facing the microtubule plus end conferring a structural polarity. Microtubules usually have 13 protofilaments but different protofilament numbers can be found in some organisms and specialized cells. It depends on Mg(2+) as a cofactor. As to expression, found in areas of rapidly dividing tissues.

The protein resides in the cytoplasm. The protein localises to the cytoskeleton. Tubulin is the major constituent of microtubules, a cylinder consisting of laterally associated linear protofilaments composed of alpha- and beta-tubulin heterodimers. Microtubules grow by the addition of GTP-tubulin dimers to the microtubule end, where a stabilizing cap forms. Below the cap, tubulin dimers are in GDP-bound state, owing to GTPase activity of alpha-tubulin. This Zea mays (Maize) protein is Tubulin beta-1 chain (TUBB1).